Reading from the N-terminus, the 327-residue chain is UPF0665 family protein C23C4.06c (327 aa).

It belongs to the UPF0665 family.

The protein resides in the cytoplasm. It is found in the nucleus. This is UPF0665 family protein C23C4.06c from Schizosaccharomyces pombe (strain 972 / ATCC 24843) (Fission yeast).